A 208-amino-acid chain; its full sequence is Large ribosomal subunit protein uL3 (208 aa).

The disordered stretch occupies residues 116-148 (GFQGVIKRHGQSRGPMAHGSRYHRRPGSMGPVA).

This sequence belongs to the universal ribosomal protein uL3 family. Part of the 50S ribosomal subunit. Forms a cluster with proteins L14 and L19.

Its function is as follows. One of the primary rRNA binding proteins, it binds directly near the 3'-end of the 23S rRNA, where it nucleates assembly of the 50S subunit. The protein is Large ribosomal subunit protein uL3 of Streptococcus pyogenes serotype M5 (strain Manfredo).